Consider the following 830-residue polypeptide: Lon protease (830 aa).

Residues 1–28 (MTFDTNDDSIAKNSLAPYNQETEQQQEE) form a disordered region. One can recognise a Lon N-terminal domain in the interval 50-245 (IPILPLRDVV…LVITHLTHEA (196 aa)). Position 397–404 (397–404 (GPPGVGKT)) interacts with ATP. Positions 633–814 (TLPPGVALGL…DEVLPLAFSE (182 aa)) constitute a Lon proteolytic domain. Active-site residues include serine 720 and lysine 763.

The protein belongs to the peptidase S16 family. Homohexamer. Organized in a ring with a central cavity.

The protein localises to the cytoplasm. The enzyme catalyses Hydrolysis of proteins in presence of ATP.. ATP-dependent serine protease that mediates the selective degradation of mutant and abnormal proteins as well as certain short-lived regulatory proteins. Required for cellular homeostasis and for survival from DNA damage and developmental changes induced by stress. Degrades polypeptides processively to yield small peptide fragments that are 5 to 10 amino acids long. Binds to DNA in a double-stranded, site-specific manner. The polypeptide is Lon protease (Lawsonia intracellularis (strain PHE/MN1-00)).